A 64-amino-acid polypeptide reads, in one-letter code: Alpha-conotoxin-like Lt1.3 (64 aa).

A signal peptide spans Met-1 to Ser-21. A propeptide spanning residues Phe-22 to Asp-45 is cleaved from the precursor. 2 disulfides stabilise this stretch: Cys-47–Cys-53 and Cys-48–Cys-61. A lacks the Ser-Xaa-Pro motif that is crucial for potent interaction with nAChR region spans residues Asp-49–Pro-51.

This sequence belongs to the conotoxin A superfamily. In terms of tissue distribution, expressed by the venom duct.

Its subcellular location is the secreted. Its function is as follows. Alpha-conotoxins act on postsynaptic membranes, they bind to the nicotinic acetylcholine receptors (nAChR) and thus inhibit them. Has possibly a distinct nAChR binding mode from other alpha-conotoxins, due to a different three residue motif (lacks the Ser-Xaa-Pro motif). This Conus litteratus (Lettered cone) protein is Alpha-conotoxin-like Lt1.3.